A 95-amino-acid polypeptide reads, in one-letter code: Large ribosomal subunit protein bL25 (95 aa).

This sequence belongs to the bacterial ribosomal protein bL25 family. Part of the 50S ribosomal subunit; part of the 5S rRNA/L5/L18/L25 subcomplex. Contacts the 5S rRNA. Binds to the 5S rRNA independently of L5 and L18.

This is one of the proteins that binds to the 5S RNA in the ribosome where it forms part of the central protuberance. The polypeptide is Large ribosomal subunit protein bL25 (Shewanella sp. (strain ANA-3)).